The primary structure comprises 1788 residues: Protein TIC 214 (1788 aa).

The next 6 membrane-spanning stretches (helical) occupy residues isoleucine 25–glycine 45, isoleucine 70–leucine 90, proline 95–histidine 115, leucine 132–leucine 152, valine 180–isoleucine 200, and isoleucine 223–leucine 243. Disordered stretches follow at residues leucine 248 to glutamate 297 and aspartate 1482 to arginine 1526. Composition is skewed to basic and acidic residues over residues lysine 253 to threonine 277 and proline 1513 to arginine 1526.

The protein belongs to the TIC214 family. As to quaternary structure, part of the Tic complex.

It localises to the plastid. The protein localises to the chloroplast inner membrane. In terms of biological role, involved in protein precursor import into chloroplasts. May be part of an intermediate translocation complex acting as a protein-conducting channel at the inner envelope. The protein is Protein TIC 214 of Ranunculus macranthus (Large buttercup).